We begin with the raw amino-acid sequence, 664 residues long: DNA ligase (664 aa).

Residues 32-36 (DKEYD) and 80-81 (SL) contribute to the NAD(+) site. Residue Lys-122 is the N6-AMP-lysine intermediate of the active site. NAD(+)-binding residues include Arg-144, Glu-178, and Lys-314. The Zn(2+) site is built by Cys-407, Cys-410, Cys-423, and Cys-429. Positions 587–664 (IDENPFMGKT…NEEEFSNKIK (78 aa)) constitute a BRCT domain.

It belongs to the NAD-dependent DNA ligase family. LigA subfamily. It depends on Mg(2+) as a cofactor. Mn(2+) serves as cofactor.

It catalyses the reaction NAD(+) + (deoxyribonucleotide)n-3'-hydroxyl + 5'-phospho-(deoxyribonucleotide)m = (deoxyribonucleotide)n+m + AMP + beta-nicotinamide D-nucleotide.. Its function is as follows. DNA ligase that catalyzes the formation of phosphodiester linkages between 5'-phosphoryl and 3'-hydroxyl groups in double-stranded DNA using NAD as a coenzyme and as the energy source for the reaction. It is essential for DNA replication and repair of damaged DNA. This chain is DNA ligase, found in Clostridium botulinum (strain Kyoto / Type A2).